Reading from the N-terminus, the 489-residue chain is Probable transporter MCH1 (489 aa).

3 consecutive transmembrane segments (helical) span residues 30-50 (IAYI…LISL), 68-88 (MIVT…GIIA), and 92-112 (GPIT…AYLA). The N-linked (GlcNAc...) asparagine glycan is linked to Asn-123. 8 consecutive transmembrane segments (helical) span residues 132 to 152 (TLVC…SALI), 163 to 183 (LLSI…GSQF), 202 to 222 (VFKA…IATS), 279 to 299 (VLYI…MFIA), 307 to 327 (VLAG…YALT), 351 to 371 (WILL…YMLS), 388 to 408 (FYIG…YPTI), and 421 to 441 (AYGT…LIYA). The N-linked (GlcNAc...) asparagine glycan is linked to Asn-450. The chain crosses the membrane as a helical span at residues 462-482 (ETTALEFCAAILLTVVVTVLW).

The protein belongs to the major facilitator superfamily.

It is found in the vacuole membrane. Its function is as follows. Probable transporter. The polypeptide is Probable transporter MCH1 (MCH1) (Candida glabrata (strain ATCC 2001 / BCRC 20586 / JCM 3761 / NBRC 0622 / NRRL Y-65 / CBS 138) (Yeast)).